The sequence spans 250 residues: UPF0736 protein YjbA (250 aa).

The protein belongs to the UPF0736 family.

This is UPF0736 protein YjbA (yjbA) from Bacillus subtilis (strain 168).